Here is a 184-residue protein sequence, read N- to C-terminus: NADH-quinone oxidoreductase subunit B (184 aa).

[4Fe-4S] cluster-binding residues include C63, C64, C128, and C158.

This sequence belongs to the complex I 20 kDa subunit family. In terms of assembly, NDH-1 is composed of 14 different subunits. Subunits NuoB, C, D, E, F, and G constitute the peripheral sector of the complex. Requires [4Fe-4S] cluster as cofactor.

Its subcellular location is the cell inner membrane. It carries out the reaction a quinone + NADH + 5 H(+)(in) = a quinol + NAD(+) + 4 H(+)(out). Functionally, NDH-1 shuttles electrons from NADH, via FMN and iron-sulfur (Fe-S) centers, to quinones in the respiratory chain. The immediate electron acceptor for the enzyme in this species is believed to be ubiquinone. Couples the redox reaction to proton translocation (for every two electrons transferred, four hydrogen ions are translocated across the cytoplasmic membrane), and thus conserves the redox energy in a proton gradient. The protein is NADH-quinone oxidoreductase subunit B of Xanthomonas oryzae pv. oryzae (strain MAFF 311018).